A 148-amino-acid polypeptide reads, in one-letter code: 3-dehydroquinate dehydratase (148 aa).

The active-site Proton acceptor is Y26. Residues N75, H81, and D88 each contribute to the substrate site. The active-site Proton donor is the H101. Residues 102–103 and R112 each bind substrate; that span reads LS.

The protein belongs to the type-II 3-dehydroquinase family. In terms of assembly, homododecamer.

The catalysed reaction is 3-dehydroquinate = 3-dehydroshikimate + H2O. It participates in metabolic intermediate biosynthesis; chorismate biosynthesis; chorismate from D-erythrose 4-phosphate and phosphoenolpyruvate: step 3/7. In terms of biological role, catalyzes a trans-dehydration via an enolate intermediate. This chain is 3-dehydroquinate dehydratase, found in Shewanella frigidimarina (strain NCIMB 400).